Consider the following 494-residue polypeptide: MVLGTSSGAGKTLIATAICRCLRRKGEQPIPFKGQNMSNNAWVDTQGREMAYSQALQSWSAGLEPSAEMNPVLLKPKGDCTSEVIHLGKSVGTSKAINYYEDWFDSGWEAIKKGLAILLKSKIDGRLILEGAGSPVEVNLQHKDLTNLKLAKFLNANCILVADIERGGVFAQIIGTIALMKPDEKKLIKGIIINRFRGDKALFESGVTWIEKETGIPVLGILPWLKEIFPPEDSLDLLERKQVNKSAEIEIAIIKLPRISNFSDLDPFFSDSSIQMRWIEPGQDLGNPDVLIIPGSKQTIKDLESLNKTGLSNQIKNYAKKGGNIFGICGGLQMLGKTLEDPHKQESIKEQNTFSNMGMNLLPIKTTFGEIKHTSQREEKVSWPVSQSLKGFEMHYGESDLINNTDSEIISLFKNSSLGWVIEKKDKSFVGGTYLHGIFENDEWRRQWINKIRQKKGLNHLKIDKENNNDKRERLLDLLTDAFEKNINIDILIK.

A GATase cobBQ-type domain is found at 248–444 (EIEIAIIKLP…LHGIFENDEW (197 aa)). C329 functions as the Nucleophile in the catalytic mechanism. Residue H436 is part of the active site.

Belongs to the CobB/CobQ family. CobQ subfamily.

Its pathway is cofactor biosynthesis; adenosylcobalamin biosynthesis. Functionally, catalyzes amidations at positions B, D, E, and G on adenosylcobyrinic A,C-diamide. NH(2) groups are provided by glutamine, and one molecule of ATP is hydrogenolyzed for each amidation. The sequence is that of Cobyric acid synthase from Prochlorococcus marinus (strain NATL1A).